The following is a 347-amino-acid chain: NADH-ubiquinone oxidoreductase chain 2 (347 aa).

10 consecutive transmembrane segments (helical) span residues 13–33 (VILG…WIGF), 59–79 (YFFT…LNLM), 96–116 (MIMT…FWVP), 122–142 (IPLS…LTVL), 149–169 (INLT…GWGG), 178–198 (IMAY…IYNP), 200–220 (MTLL…MLFM), 240–260 (IVTI…LTGF), 276–296 (IILP…YMRL), and 325–345 (LLTP…MIII).

The protein belongs to the complex I subunit 2 family. As to quaternary structure, core subunit of respiratory chain NADH dehydrogenase (Complex I) which is composed of 45 different subunits. Interacts with TMEM242.

It is found in the mitochondrion inner membrane. It carries out the reaction a ubiquinone + NADH + 5 H(+)(in) = a ubiquinol + NAD(+) + 4 H(+)(out). Functionally, core subunit of the mitochondrial membrane respiratory chain NADH dehydrogenase (Complex I) which catalyzes electron transfer from NADH through the respiratory chain, using ubiquinone as an electron acceptor. Essential for the catalytic activity and assembly of complex I. In Molossus ater (Black mastiff bat), this protein is NADH-ubiquinone oxidoreductase chain 2.